We begin with the raw amino-acid sequence, 150 residues long: UPF0178 protein Daro_2879 (150 aa).

This sequence belongs to the UPF0178 family.

The protein is UPF0178 protein Daro_2879 of Dechloromonas aromatica (strain RCB).